We begin with the raw amino-acid sequence, 209 residues long: Tektin bundle-interacting protein 1 (209 aa).

Microtubule inner protein component of sperm flagellar doublet microtubules.

It is found in the cytoplasm. It localises to the cytoskeleton. Its subcellular location is the cilium axoneme. The protein resides in the flagellum axoneme. Its function is as follows. Microtubule inner protein (MIP) part of the dynein-decorated doublet microtubules (DMTs) in cilia axoneme, which is required for motile cilia beating. Located at the center of the tektin bundle where may function to recruit tektins or stabilize the bundle. The protein is Tektin bundle-interacting protein 1 of Homo sapiens (Human).